Here is a 137-residue protein sequence, read N- to C-terminus: Phospholipase A2 homolog PLA2-03 (137 aa).

The signal sequence occupies residues 1-16 (MRTLWIVAVLLVGVEG). Disulfide bonds link C42–C131, C44–C60, C59–C111, C65–C137, C66–C104, C73–C97, and C91–C102. The important for membrane-damaging activities in eukaryotes and bacteria; heparin-binding stretch occupies residues 121-133 (KKYKIFPKFLCKK).

It belongs to the phospholipase A2 family. Group II subfamily. K49 sub-subfamily. Expressed by the venom gland.

Its subcellular location is the secreted. In terms of biological role, snake venom phospholipase A2 homolog that lacks enzymatic activity. Is myotoxic and displays edema-inducing activities in mouse paw. A model of myotoxic mechanism has been proposed: an apo Lys49-PLA2 is activated by the entrance of a hydrophobic molecule (e.g. fatty acid) at the hydrophobic channel of the protein leading to a reorientation of a monomer. This reorientation causes a transition between 'inactive' to 'active' states, causing alignment of C-terminal and membrane-docking sites (MDoS) side-by-side and putting the membrane-disruption sites (MDiS) in the same plane, exposed to solvent and in a symmetric position for both monomers. The MDoS region stabilizes the toxin on membrane by the interaction of charged residues with phospholipid head groups. Subsequently, the MDiS region destabilizes the membrane with penetration of hydrophobic residues. This insertion causes a disorganization of the membrane, allowing an uncontrolled influx of ions (i.e. calcium and sodium), and eventually triggering irreversible intracellular alterations and cell death. This chain is Phospholipase A2 homolog PLA2-03, found in Ovophis okinavensis (Ryukyu Island pit viper).